A 568-amino-acid polypeptide reads, in one-letter code: Probable pectinesterase/pectinesterase inhibitor 23 (568 aa).

The signal sequence occupies residues 1 to 33 (MGSDGDKKKKFIVAGSVSGFLVIMVVSVAVVTS). The interval 45 to 198 (RKTTKAVQAV…RELSSNSLAM (154 aa)) is pectinesterase inhibitor 23. N94, N210, and N316 each carry an N-linked (GlcNAc...) asparagine glycan. The interval 251 to 548 (PGPVKANAVV…PQDALLYTGD (298 aa)) is pectinesterase 23. Substrate-binding residues include T333 and Q363. The active-site Proton donor; for pectinesterase activity is the D386. Residues C400 and C420 are joined by a disulfide bond. The active-site Nucleophile; for pectinesterase activity is D407. Residues R475 and W477 each contribute to the substrate site.

The protein in the N-terminal section; belongs to the PMEI family. This sequence in the C-terminal section; belongs to the pectinesterase family. In terms of tissue distribution, expressed in mature pollen grains in the anthers and on the stigma. Found in pollen tubes within the style.

It localises to the secreted. The protein localises to the cell wall. The catalysed reaction is [(1-&gt;4)-alpha-D-galacturonosyl methyl ester](n) + n H2O = [(1-&gt;4)-alpha-D-galacturonosyl](n) + n methanol + n H(+). Its pathway is glycan metabolism; pectin degradation; 2-dehydro-3-deoxy-D-gluconate from pectin: step 1/5. Acts in the modification of cell walls via demethylesterification of cell wall pectin. This is Probable pectinesterase/pectinesterase inhibitor 23 (PME23) from Arabidopsis thaliana (Mouse-ear cress).